The following is a 278-amino-acid chain: Ribosomal RNA small subunit methyltransferase A (278 aa).

The S-adenosyl-L-methionine site is built by Asn28, Leu30, Gly55, Glu77, Asp103, and Asn122.

The protein belongs to the class I-like SAM-binding methyltransferase superfamily. rRNA adenine N(6)-methyltransferase family. RsmA subfamily.

It localises to the cytoplasm. The enzyme catalyses adenosine(1518)/adenosine(1519) in 16S rRNA + 4 S-adenosyl-L-methionine = N(6)-dimethyladenosine(1518)/N(6)-dimethyladenosine(1519) in 16S rRNA + 4 S-adenosyl-L-homocysteine + 4 H(+). Its function is as follows. Specifically dimethylates two adjacent adenosines (A1518 and A1519) in the loop of a conserved hairpin near the 3'-end of 16S rRNA in the 30S particle. May play a critical role in biogenesis of 30S subunits. The chain is Ribosomal RNA small subunit methyltransferase A from Cereibacter sphaeroides (strain ATCC 17025 / ATH 2.4.3) (Rhodobacter sphaeroides).